Here is a 233-residue protein sequence, read N- to C-terminus: Putative N-acetylmannosamine-6-phosphate 2-epimerase (233 aa).

It belongs to the NanE family.

It carries out the reaction an N-acyl-D-glucosamine 6-phosphate = an N-acyl-D-mannosamine 6-phosphate. It functions in the pathway amino-sugar metabolism; N-acetylneuraminate degradation; D-fructose 6-phosphate from N-acetylneuraminate: step 3/5. Functionally, converts N-acetylmannosamine-6-phosphate (ManNAc-6-P) to N-acetylglucosamine-6-phosphate (GlcNAc-6-P). In Yersinia pestis bv. Antiqua (strain Antiqua), this protein is Putative N-acetylmannosamine-6-phosphate 2-epimerase.